The sequence spans 133 residues: Ubiquitin-like FUBI-ribosomal protein eS30 fusion protein (133 aa).

The region spanning 1-74 (MQLFVRAQEL…LEVAGRMLGG (74 aa)) is the Ubiquitin-like domain. An N6-succinyllysine modification is found at K125.

It in the N-terminal section; belongs to the ubiquitin family. In the C-terminal section; belongs to the eukaryotic ribosomal protein eS30 family. Component of the 40S subunit of the ribosome. Post-translationally, FUBI is cleaved from ribosomal protein S30 by the deubiquitinase USP36 before the assembly of ribosomal protein S30 into pre-40S ribosomal particles. FUBI removal from ribosomal protein S30 is a crucial event for the final maturation of pre-40S particles.

It localises to the cytoplasm. The protein resides in the nucleus. Functionally, may have pro-apoptotic activity. Component of the 40S subunit of the ribosome. Contributes to the assembly and function of 40S ribosomal subunits. This is Ubiquitin-like FUBI-ribosomal protein eS30 fusion protein (FAU) from Oryctolagus cuniculus (Rabbit).